A 176-amino-acid chain; its full sequence is Photosystem I assembly protein Ycf4 (176 aa).

Helical transmembrane passes span 22-42 (FLWA…GTAS) and 57-77 (VMTF…SMLF).

It belongs to the Ycf4 family.

It localises to the plastid thylakoid membrane. Seems to be required for the assembly of the photosystem I complex. The protein is Photosystem I assembly protein Ycf4 of Cuscuta obtusiflora (Peruvian dodder).